Reading from the N-terminus, the 235-residue chain is Large ribosomal subunit protein uL1 (235 aa).

The protein belongs to the universal ribosomal protein uL1 family. Part of the 50S ribosomal subunit.

In terms of biological role, binds directly to 23S rRNA. The L1 stalk is quite mobile in the ribosome, and is involved in E site tRNA release. Its function is as follows. Protein L1 is also a translational repressor protein, it controls the translation of the L11 operon by binding to its mRNA. The polypeptide is Large ribosomal subunit protein uL1 (Mycolicibacterium vanbaalenii (strain DSM 7251 / JCM 13017 / BCRC 16820 / KCTC 9966 / NRRL B-24157 / PYR-1) (Mycobacterium vanbaalenii)).